A 481-amino-acid polypeptide reads, in one-letter code: Cysteine--tRNA ligase (481 aa).

Cys29 is a binding site for Zn(2+). The 'HIGH' region motif lies at 31 to 41 (PTTYDYIHLGN). Zn(2+)-binding residues include Cys209, His234, and Glu238. The 'KMSKS' region signature appears at 267–271 (KMSKS). Lys270 is a binding site for ATP.

Belongs to the class-I aminoacyl-tRNA synthetase family. Monomer. Zn(2+) serves as cofactor.

It is found in the cytoplasm. The enzyme catalyses tRNA(Cys) + L-cysteine + ATP = L-cysteinyl-tRNA(Cys) + AMP + diphosphate. This is Cysteine--tRNA ligase from Heliobacterium modesticaldum (strain ATCC 51547 / Ice1).